Consider the following 254-residue polypeptide: MASPSQDQIKVLEQSRQRLVQLTRSLGSLIGSLNQSDPLPSWSSLQSQASIISNNLLSVSEHLSDNCDLLSALVAYPGPEYPGRTQASTLEQLLRTKLDPRIEDWVARGRRAGASALEDKDALSETELAELWDWAPVEANQEARRRNWGGDYTLEEREMGIQNVVTGLRRQLEDDERDEDEDEDDEEEEEGEGEDEEMEVVGVRRRSDAGAGLGFDTAVPTPASSQQVQKGAGPVVPLDDVLRFMTTGTLPQQR.

Residues 154–190 (LEEREMGIQNVVTGLRRQLEDDERDEDEDEDDEEEEE) are a coiled coil. The disordered stretch occupies residues 167 to 234 (GLRRQLEDDE…SQQVQKGAGP (68 aa)). The span at 173 to 199 (EDDERDEDEDEDDEEEEEGEGEDEEME) shows a compositional bias: acidic residues.

This sequence belongs to the Mediator complex subunit 8 family. In terms of assembly, component of the Mediator complex.

Its subcellular location is the nucleus. Its function is as follows. Component of the Mediator complex, a coactivator involved in the regulated transcription of nearly all RNA polymerase II-dependent genes. Mediator functions as a bridge to convey information from gene-specific regulatory proteins to the basal RNA polymerase II transcription machinery. Mediator is recruited to promoters by direct interactions with regulatory proteins and serves as a scaffold for the assembly of a functional preinitiation complex with RNA polymerase II and the general transcription factors. The sequence is that of Mediator of RNA polymerase II transcription subunit 8 (med8) from Aspergillus clavatus (strain ATCC 1007 / CBS 513.65 / DSM 816 / NCTC 3887 / NRRL 1 / QM 1276 / 107).